The primary structure comprises 37 residues: Large ribosomal subunit protein bL36 (37 aa).

It belongs to the bacterial ribosomal protein bL36 family.

The chain is Large ribosomal subunit protein bL36 from Staphylococcus aureus (strain Mu3 / ATCC 700698).